Reading from the N-terminus, the 325-residue chain is NAD kinase (325 aa).

The active-site Proton acceptor is the Asp91. NAD(+) contacts are provided by residues 91 to 92 (DG), His96, 165 to 166 (ND), His176, His193, Asp195, and 206 to 211 (TAYALS).

This sequence belongs to the NAD kinase family. The cofactor is a divalent metal cation.

It is found in the cytoplasm. It catalyses the reaction NAD(+) + ATP = ADP + NADP(+) + H(+). In terms of biological role, involved in the regulation of the intracellular balance of NAD and NADP, and is a key enzyme in the biosynthesis of NADP. Catalyzes specifically the phosphorylation on 2'-hydroxyl of the adenosine moiety of NAD to yield NADP. This Psychrobacter arcticus (strain DSM 17307 / VKM B-2377 / 273-4) protein is NAD kinase.